Consider the following 636-residue polypeptide: DNA ligase (636 aa).

Lys-113 serves as the catalytic N6-AMP-lysine intermediate. Positions 560–636 (NSEGIFQNQT…KSSFSKKFEK (77 aa)) constitute a BRCT domain.

The protein belongs to the NAD-dependent DNA ligase family.

The catalysed reaction is NAD(+) + (deoxyribonucleotide)n-3'-hydroxyl + 5'-phospho-(deoxyribonucleotide)m = (deoxyribonucleotide)n+m + AMP + beta-nicotinamide D-nucleotide.. Its function is as follows. Catalyzes the formation of phosphodiester linkages between 5'-phosphoryl and 3'-hydroxyl groups in double-stranded DNA using NAD as a coenzyme and as the energy source for the reaction. The polypeptide is DNA ligase (Acanthamoeba polyphaga (Amoeba)).